Consider the following 535-residue polypeptide: Sodium/hydrogen exchanger 9B2 (535 aa).

A compositionally biased stretch (basic and acidic residues) spans 1–14; the sequence is MRNQDKRAAHKDSE. The interval 1–70 is disordered; that stretch reads MRNQDKRAAH…TPAEPNHLQR (70 aa). Residues 1–85 are Cytoplasmic-facing; that stretch reads MRNQDKRAAH…ACPPRGLLAR (85 aa). 2 stretches are compositionally biased toward polar residues: residues 16–34 and 46–58; these read STEV…QETG and TEGS…NEKM. Residues 86 to 103 traverse the membrane as a helical segment; sequence VITNVTMVILLWAVVWSV. Topologically, residues 104–112 are extracellular; sequence TGSECLPGG. The helical transmembrane segment at 113–132 threads the bilayer; that stretch reads NLFGIIMLFYCAIIGGKLFG. The Cytoplasmic portion of the chain corresponds to 133–143; the sequence is LIKLPTLPPLP. Residues 144–160 form a helical membrane-spanning segment; it reads PLLGMLLAGFLIRNVPV. Topologically, residues 161 to 170 are extracellular; sequence ISDNIQIKHK. The chain crosses the membrane as a helical span at residues 171–188; it reads WSSALRSIALSVILVRAG. At 189-199 the chain is on the cytoplasmic side; that stretch reads LGLDSNALKKL. A helical transmembrane segment spans residues 200-226; it reads KGVCVRLSLGPCLIEACTSAVLAYFLM. Over 227–232 the chain is Extracellular; the sequence is GLPWQW. A helical transmembrane segment spans residues 233–241; the sequence is GFMLGFVLG. At 242–269 the chain is on the cytoplasmic side; it reads AVSPAVVVPSMLLLQEGGYGVEKGIPTL. Na(+) is bound by residues Val243, Gly274, Asp277, and Asp278. Residues 270–289 traverse the membrane as a helical segment; that stretch reads LMAAGSFDDILAITGFNTCL. At 290–299 the chain is on the extracellular side; that stretch reads GMAFSTGSTV. A helical membrane pass occupies residues 300 to 323; sequence FNVLKGVLEVIIGVVTGLVLGFFI. At 324 to 338 the chain is on the cytoplasmic side; it reads QYFPSSDQDNLVWKR. Residues 339–356 form a helical membrane-spanning segment; sequence AFLVLGLSVLAVFSSTYF. Topologically, residues 357–360 are extracellular; that stretch reads GFPG. A helical membrane pass occupies residues 361-372; it reads SGGLCTLVTAFL. Over 373–389 the chain is Cytoplasmic; it reads AGRGWASTKTDVEKVIA. A helical transmembrane segment spans residues 390-410; the sequence is VAWDIFQPLLFGLIGAEVLIT. The Extracellular segment spans residues 411–416; the sequence is ALRPET. The helical transmembrane segment at 417–439 threads the bilayer; it reads IGLCVATLGIAVLIRILVTYLMV. Residues 440 to 460 lie on the Cytoplasmic side of the membrane; it reads CFAGFNIKEKIFISFAWLPKA. The helical transmembrane segment at 461–472 threads the bilayer; the sequence is TVQAAIGSVALD. Over 473 to 485 the chain is Extracellular; sequence TARSHGEKQLEGY. Residues 486-508 traverse the membrane as a helical segment; sequence GMDVLTVAFLSIIITAPVGSLLI. The Cytoplasmic segment spans residues 509–535; it reads GLLGPRLLQKAEQNKDEEDQGETSIQV.

It belongs to the monovalent cation:proton antiporter 1 (CPA1) transporter (TC 2.A.36) family. In terms of assembly, homodimer; dimerization is essential for SLC9B2 activity. Lipids seem to play a role in the stabilization of the dimerization subdomain.

It localises to the cell membrane. The protein localises to the mitochondrion membrane. The protein resides in the endosome membrane. Its subcellular location is the recycling endosome membrane. It is found in the lysosome membrane. It localises to the cytoplasmic vesicle. The protein localises to the secretory vesicle. The protein resides in the synaptic vesicle membrane. Its subcellular location is the cell projection. It is found in the cilium. It localises to the flagellum membrane. The protein localises to the basolateral cell membrane. The protein resides in the apical cell membrane. The enzyme catalyses Li(+)(out) + H(+)(in) = Li(+)(in) + H(+)(out). It carries out the reaction Li(+)(in) + Na(+)(out) = Li(+)(out) + Na(+)(in). The catalysed reaction is Na(+)(in) + H(+)(out) = Na(+)(out) + H(+)(in). Allosterically inhibited by the N-terminal domain. Inhibited by phloretin. Functionally, electroneutral Na(+) Li(+)/H(+) antiporter that extrudes Na(+) or Li(+) in exchange for external protons across the membrane. Uses the proton gradient/membrane potential to extrude sodium. Contributes to the regulation of intracellular pH and sodium homeostasis. Also able to mediate Na(+)/Li(+) antiporter activity in kidney. May play a physiological role in renal tubular function and blood pressure homeostasis. Plays an important role for insulin secretion and clathrin-mediated endocytosis in beta-cells. Involved in sperm motility and fertility. It is controversial whether SLC9B2 plays a role in osteoclast differentiation or not. This is Sodium/hydrogen exchanger 9B2 (SLC9B2) from Bison bison bison (North American plains bison).